The sequence spans 356 residues: Septin-2A (356 aa).

A Septin-type G domain is found at 33–305; sequence KGFEFTLMVV…ENFRSERLKK (273 aa). The G1 motif stretch occupies residues 43–50; sequence GESGLGKS. GTP-binding positions include 43–50, T77, G103, 182–190, G240, and R255; these read GESGLGKS and KADTLTLRE. Positions 100–103 are G3 motif; that stretch reads DTPG. Residues 181-184 are G4 motif; that stretch reads AKAD. The important for dimerization stretch occupies residues 259–269; it reads WGVVEVENTEH.

It belongs to the TRAFAC class TrmE-Era-EngA-EngB-Septin-like GTPase superfamily. Septin GTPase family. Septins polymerize into heterooligomeric protein complexes that form filaments, and associate with cellular membranes, actin filaments and microtubules. GTPase activity is required for filament formation. Can form heterooligomers with other family members and form filaments. Interacts with wdpcp.

Its subcellular location is the cytoplasm. It is found in the cytoskeleton. The protein localises to the spindle. It localises to the cleavage furrow. The protein resides in the midbody. Its subcellular location is the cell projection. It is found in the cilium membrane. Functionally, filament-forming cytoskeletal GTPase. Required for normal organization of the actin cytoskeleton. Plays a role in the biogenesis of polarized columnar-shaped epithelium. Required for the progression through mitosis through regulation of chromosome congression. During anaphase, may be required for chromosome segregation and spindle elongation. Probably plays a role in ciliogenesis and collective cell movements including convergent extension during gastrulation. In cilia, required for the integrity of the diffusion barrier at the base of the primary cilium that prevents diffusion of transmembrane proteins between the cilia and plasma membranes. Controls cell shape and not polarization of cells during convergent extension. This chain is Septin-2A (sept2-a), found in Xenopus laevis (African clawed frog).